The following is a 539-amino-acid chain: Inositol 1,4,5-triphosphate receptor associated 2 (539 aa).

3 disordered regions span residues 1–21, 69–98, and 147–171; these read MLCVKGPPEQEPEDGALDVTR, YLTQPSSEQTSSSESTVTSSESGSDILHMA, and AGEELRTTENGGKGSAPGETEISMP. Over 1–479 the chain is Cytoplasmic; that stretch reads MLCVKGPPEQ…LQASFRRANR (479 aa). Residues 74–92 show a composition bias toward low complexity; that stretch reads SSEQTSSSESTVTSSESGS. The residue at position 78 (T78) is a Phosphothreonine. A coiled-coil region spans residues 298–326; it reads MIQHVENLKRMYAKEHAELEDLKQALLQN. The tract at residues 334 to 353 is disordered; it reads PDEDDCQIKKRSSSLNSKPS. 3 positions are modified to phosphoserine: S347, S354, and S408. The tract at residues 418 to 449 is disordered; the sequence is ERSDVKARDAPEPQGEEAVERTRKPSLSERRS. The segment covering 435–449 has biased composition (basic and acidic residues); that stretch reads AVERTRKPSLSERRS. The chain crosses the membrane as a helical; Anchor for type IV membrane protein span at residues 480–500; it reads ALWLTGLIIILIAALMSFLTG. Residues 501-539 are Lumenal-facing; sequence QLFQTAVEAAPTQEGDSWLSLEHILWPFTRLGHDGPPPV.

The protein belongs to the IRAG2 family. As to quaternary structure, interacts (via coiled-coil domain) with ITPR3. Interacts with SUN1 and SUN2. Interacts with microtubules. Interacts with HCN4; regulates HCN4 channel activity. The removal of the C-terminal lumenal domain occurs by proteolytic processing. Spleen and thymus. Expressed at high levels in pre B-cells, mature B-cells and pre T-cells. Expressed at low levels in mature T-cells and plasma B-cells. Expressed in circumvallate (CV), foliate (FL) and fungiform (FF) taste papillae cells of the tongue epithelium.

The protein localises to the cytoplasm. The protein resides in the endoplasmic reticulum membrane. Its subcellular location is the nucleus envelope. It localises to the cytoskeleton. It is found in the microtubule organizing center. The protein localises to the centrosome. The protein resides in the spindle pole. Its subcellular location is the chromosome. In terms of biological role, plays a role in the delivery of peptides to major histocompatibility complex (MHC) class I molecules; this occurs in a transporter associated with antigen processing (TAP)-independent manner. May play a role in taste signal transduction via ITPR3. May play a role during fertilization in pronucleus congression and fusion. Plays a role in maintaining nuclear shape, maybe as a component of the LINC complex and through interaction with microtubules. Plays a role in the regulation of cellular excitability by regulating the hyperpolarization-activated cyclic nucleotide-gated HCN4 channel activity. The protein is Inositol 1,4,5-triphosphate receptor associated 2 (Irag2) of Mus musculus (Mouse).